A 595-amino-acid chain; its full sequence is UvrABC system protein C (595 aa).

In terms of domain architecture, GIY-YIG spans 17 to 94 (IEPGCYLMKD…IKQYQPRYNI (78 aa)). One can recognise a UVR domain in the interval 199 to 234 (KTILHNLEQKMQESSESLDFERAKEYRDLIQHIHNL).

It belongs to the UvrC family. Interacts with UvrB in an incision complex.

The protein localises to the cytoplasm. Its function is as follows. The UvrABC repair system catalyzes the recognition and processing of DNA lesions. UvrC both incises the 5' and 3' sides of the lesion. The N-terminal half is responsible for the 3' incision and the C-terminal half is responsible for the 5' incision. This is UvrABC system protein C from Staphylococcus saprophyticus subsp. saprophyticus (strain ATCC 15305 / DSM 20229 / NCIMB 8711 / NCTC 7292 / S-41).